A 131-amino-acid polypeptide reads, in one-letter code: Phosphomevalonate dehydratase small subunit (131 aa).

Serine 62 acts as the Proton acceptor in catalysis.

It belongs to the AcnX type II small subunit family. Heterodimer composed of a large subunit (PMDh-L) and a small subunit (PMDh-S).

It carries out the reaction (R)-5-phosphomevalonate = (2E)-3-methyl-5-phosphooxypent-2-enoate + H2O. It functions in the pathway isoprenoid biosynthesis; isopentenyl diphosphate biosynthesis via mevalonate pathway. Functionally, component of a hydro-lyase that catalyzes the dehydration of mevalonate 5-phosphate (MVA5P) to form trans-anhydromevalonate 5-phosphate (tAHMP). Involved in the archaeal mevalonate (MVA) pathway, which provides fundamental precursors for isoprenoid biosynthesis, such as isopentenyl diphosphate (IPP) and dimethylallyl diphosphate (DMAPP). This chain is Phosphomevalonate dehydratase small subunit, found in Methanothermobacter thermautotrophicus (strain ATCC 29096 / DSM 1053 / JCM 10044 / NBRC 100330 / Delta H) (Methanobacterium thermoautotrophicum).